Here is a 188-residue protein sequence, read N- to C-terminus: uncharacterized protein (188 aa).

This is an uncharacterized protein from Methanocaldococcus jannaschii (strain ATCC 43067 / DSM 2661 / JAL-1 / JCM 10045 / NBRC 100440) (Methanococcus jannaschii).